A 486-amino-acid chain; its full sequence is Membrane-bound lytic murein transglycosylase F (486 aa).

An N-terminal signal peptide occupies residues 1 to 28; that stretch reads MFAHTLFRKRCAIWLLAIGIFLMLGSCA. The non-LT domain stretch occupies residues 29 to 267; the sequence is EKPSELERIK…RLRERYYGHV (239 aa). Residues 268 to 486 are LT domain; it reads DVLGYVGAYA…TDLMEELPPL (219 aa). Glu-314 is a catalytic residue.

The protein in the N-terminal section; belongs to the bacterial solute-binding protein 3 family. It in the C-terminal section; belongs to the transglycosylase Slt family.

The protein localises to the cell outer membrane. It catalyses the reaction Exolytic cleavage of the (1-&gt;4)-beta-glycosidic linkage between N-acetylmuramic acid (MurNAc) and N-acetylglucosamine (GlcNAc) residues in peptidoglycan, from either the reducing or the non-reducing ends of the peptidoglycan chains, with concomitant formation of a 1,6-anhydrobond in the MurNAc residue.. Its function is as follows. Murein-degrading enzyme that degrades murein glycan strands and insoluble, high-molecular weight murein sacculi, with the concomitant formation of a 1,6-anhydromuramoyl product. Lytic transglycosylases (LTs) play an integral role in the metabolism of the peptidoglycan (PG) sacculus. Their lytic action creates space within the PG sacculus to allow for its expansion as well as for the insertion of various structures such as secretion systems and flagella. The chain is Membrane-bound lytic murein transglycosylase F from Stutzerimonas stutzeri (strain A1501) (Pseudomonas stutzeri).